The chain runs to 326 residues: Glycerol-3-phosphate dehydrogenase [NAD(P)+] (326 aa).

W15, R35, and K107 together coordinate NADPH. Residues K107, G135, and S137 each contribute to the sn-glycerol 3-phosphate site. A139 is a binding site for NADPH. Sn-glycerol 3-phosphate-binding residues include K190, D243, S253, R254, and N255. Residue K190 is the Proton acceptor of the active site. An NADPH-binding site is contributed by R254. Positions 273 and 275 each coordinate NADPH.

Belongs to the NAD-dependent glycerol-3-phosphate dehydrogenase family.

Its subcellular location is the cytoplasm. The catalysed reaction is sn-glycerol 3-phosphate + NAD(+) = dihydroxyacetone phosphate + NADH + H(+). The enzyme catalyses sn-glycerol 3-phosphate + NADP(+) = dihydroxyacetone phosphate + NADPH + H(+). The protein operates within membrane lipid metabolism; glycerophospholipid metabolism. Catalyzes the reduction of the glycolytic intermediate dihydroxyacetone phosphate (DHAP) to sn-glycerol 3-phosphate (G3P), the key precursor for phospholipid synthesis. This Bradyrhizobium diazoefficiens (strain JCM 10833 / BCRC 13528 / IAM 13628 / NBRC 14792 / USDA 110) protein is Glycerol-3-phosphate dehydrogenase [NAD(P)+].